Reading from the N-terminus, the 421-residue chain is Gamma-glutamyl phosphate reductase (421 aa).

Belongs to the gamma-glutamyl phosphate reductase family.

The protein resides in the cytoplasm. It carries out the reaction L-glutamate 5-semialdehyde + phosphate + NADP(+) = L-glutamyl 5-phosphate + NADPH + H(+). It participates in amino-acid biosynthesis; L-proline biosynthesis; L-glutamate 5-semialdehyde from L-glutamate: step 2/2. Its function is as follows. Catalyzes the NADPH-dependent reduction of L-glutamate 5-phosphate into L-glutamate 5-semialdehyde and phosphate. The product spontaneously undergoes cyclization to form 1-pyrroline-5-carboxylate. The chain is Gamma-glutamyl phosphate reductase from Pseudomonas aeruginosa (strain UCBPP-PA14).